A 1082-amino-acid chain; its full sequence is Error-prone DNA polymerase (1082 aa).

This sequence belongs to the DNA polymerase type-C family. DnaE2 subfamily.

It localises to the cytoplasm. The catalysed reaction is DNA(n) + a 2'-deoxyribonucleoside 5'-triphosphate = DNA(n+1) + diphosphate. Functionally, DNA polymerase involved in damage-induced mutagenesis and translesion synthesis (TLS). It is not the major replicative DNA polymerase. The protein is Error-prone DNA polymerase of Xanthomonas campestris pv. campestris (strain 8004).